Reading from the N-terminus, the 181-residue chain is ATP synthase subunit delta (181 aa).

The protein belongs to the ATPase delta chain family. As to quaternary structure, F-type ATPases have 2 components, F(1) - the catalytic core - and F(0) - the membrane proton channel. F(1) has five subunits: alpha(3), beta(3), gamma(1), delta(1), epsilon(1). F(0) has three main subunits: a(1), b(2) and c(10-14). The alpha and beta chains form an alternating ring which encloses part of the gamma chain. F(1) is attached to F(0) by a central stalk formed by the gamma and epsilon chains, while a peripheral stalk is formed by the delta and b chains.

The protein localises to the cell membrane. F(1)F(0) ATP synthase produces ATP from ADP in the presence of a proton or sodium gradient. F-type ATPases consist of two structural domains, F(1) containing the extramembraneous catalytic core and F(0) containing the membrane proton channel, linked together by a central stalk and a peripheral stalk. During catalysis, ATP synthesis in the catalytic domain of F(1) is coupled via a rotary mechanism of the central stalk subunits to proton translocation. Functionally, this protein is part of the stalk that links CF(0) to CF(1). It either transmits conformational changes from CF(0) to CF(1) or is implicated in proton conduction. In Clostridioides difficile (strain 630) (Peptoclostridium difficile), this protein is ATP synthase subunit delta.